A 275-amino-acid polypeptide reads, in one-letter code: Ribosomal protein L11 methyltransferase (275 aa).

The S-adenosyl-L-methionine site is built by T123, G146, D167, and N208.

It belongs to the methyltransferase superfamily. PrmA family.

It localises to the cytoplasm. It catalyses the reaction L-lysyl-[protein] + 3 S-adenosyl-L-methionine = N(6),N(6),N(6)-trimethyl-L-lysyl-[protein] + 3 S-adenosyl-L-homocysteine + 3 H(+). Its function is as follows. Methylates ribosomal protein L11. The polypeptide is Ribosomal protein L11 methyltransferase (Campylobacter fetus subsp. fetus (strain 82-40)).